The following is a 244-amino-acid chain: tRNA pseudouridine synthase A (244 aa).

The active-site Nucleophile is D52. Y110 is a substrate binding site.

It belongs to the tRNA pseudouridine synthase TruA family. Homodimer.

It catalyses the reaction uridine(38/39/40) in tRNA = pseudouridine(38/39/40) in tRNA. Functionally, formation of pseudouridine at positions 38, 39 and 40 in the anticodon stem and loop of transfer RNAs. In Thermoanaerobacter pseudethanolicus (strain ATCC 33223 / 39E) (Clostridium thermohydrosulfuricum), this protein is tRNA pseudouridine synthase A.